Here is a 115-residue protein sequence, read N- to C-terminus: DNA repair protein homolog YozK (115 aa).

Residues isoleucine 12–aspartate 115 enclose the UmuC domain. Mg(2+) is bound by residues aspartate 16 and aspartate 115.

Belongs to the DNA polymerase type-Y family. The cofactor is Mg(2+).

This Bacillus subtilis (strain 168) protein is DNA repair protein homolog YozK (yozK).